Reading from the N-terminus, the 88-residue chain is UPF0297 protein Ccel_2240 (88 aa).

Belongs to the UPF0297 family.

This chain is UPF0297 protein Ccel_2240, found in Ruminiclostridium cellulolyticum (strain ATCC 35319 / DSM 5812 / JCM 6584 / H10) (Clostridium cellulolyticum).